Here is a 739-residue protein sequence, read N- to C-terminus: MDRGTRRIWVSQNQGDTDLDYHKILTAGLTVQQGIVRQKIISVYLVDNLEAMCQLVIQAFEAGIDFQENADSFLLMLCLHHAYQGDYKLFLESNAVQYLEGHGFKFELRKKDGVNRLEELLPAATSGKNIRRTLAALPEEETTEANAGQFLSFASLFLPKLVVGEKACLEKVQRQIQVHAEQGLIQYPTAWQSVGHMMVIFRLMRTNFLIKYLLIHQGMHMVAGHDANDAVIANSVAQARFSGLLIVKTVLDHILQKTDQGVRLHPLARTAKVRNEVNAFKAALSSLAKHGEYAPFARLLNLSGVNNLEHGLYPQLSAIALGVATAHGSTLAGVNVGEQYQQLREAATEAEKQLQQYAESRELDSLGLDDQERRILMNFHQKKNEISFQQTNAMVTLRKERLAKLTEAITLASRPNLGSRQDDDNEIPFPGPISNNPDQDHLEDDPRDSRDTIIPNSAIDPEDGDFENYNGYHDDEVGTAGDLVLFDLDDHEDDNKAFELQDSSPQSQREIERERLIHPPPGNNKDDNRASDNNQQSADSEEQEGQYNRHRGPERTTANRRLSPVHEEDTPIDQGDDDPSSPPPLESDDDDASSSQQDPDYTAVAPPAPVYRSAEAHEPPHKSSNEPAETSQLNEDPDIGQSKSMQKLGETYHHLLRTQGPFEAINYYHMMKDEPVIFSTDDGKEYTYPDSLEEAYPPWLTEKERLDNENRYIYINNQQFFWPVMSPRDKFLAILQHHQ.

A coiled-coil region spans residues V334 to L363. Disordered regions lie at residues R414–D475 and F498–S642. Residues T570–P579 show a composition bias toward acidic residues. The span at A614–S624 shows a compositional bias: basic and acidic residues. The span at N625–N634 shows a compositional bias: polar residues.

Belongs to the filoviruses nucleoprotein family. As to quaternary structure, homooligomer. Homomultimerizes to form the nucleocapsid. Binds to viral genomic RNA. Interacts with VP35 and VP30 to form the nucleocapsid. Interacts with host PPP2R5C; this interaction leads to VP30 dephosphorylation and viral transcription. Interacts with VP24; this interaction facilitates nucleocapsid assembly and genome packaging. Interacts with matrix protein VP40; this interaction allows recruitment of the nucleocapsid into progeny virions. Interacts with host STAU1. Interacts with host NXF1 (via RNA-binding domain); this interaction recruits NXF1 to the inclusion bodies were viral replication takes place, probably to export viral mRNA-NXF1 complexes from these sites. Interacts with host CCDC92; this interaction sequesters NP in the host cytoplasm. Interacts with host TRIM14. Post-translationally, phosphorylated and O-glycosylated by host. Acetylated by host EP300 in vitro.

The protein localises to the virion. Its subcellular location is the host cytoplasm. Functionally, oligomerizes into helical capsid to encapsidate the viral genome, protecting it from nucleases and the cellular innate immune response. VP35 binds to and stabilizes monomeric NP, keeping it soluble. Upon virus replication, NP is recruited to bind cooperatively viral genomic RNA and VP35 is released. The encapsidated genomic RNA is termed the nucleocapsid and serves as template for transcription and replication. The nucleocapsid is helical with a pitch of 10.81 NP per turn and a diameter of about 22nm. Each NP binds to six nucleotides of viral genomic RNA, three being exposed to the solvant and three hidden into the nucleocapsid. Also recruits host PPP2R5C phosphatase to dephosphorylate VP30 and thereby promote viral transcription. Upon virion assembly and budding, NP binds to VP24 and possibly host STAU1. This chain is Nucleoprotein (NP), found in Homo sapiens (Human).